Reading from the N-terminus, the 246-residue chain is Protein lin-37 homolog (246 aa).

Position 1 is an N-acetylmethionine (M1). Glycyl lysine isopeptide (Lys-Gly) (interchain with G-Cter in SUMO2) cross-links involve residues K5 and K7. Basic and acidic residues predominate over residues 36–55 (DRERLDEEPGKTSLDTHNKD). Disordered regions lie at residues 36–90 (DRER…GGPQ) and 127–209 (PTVR…LIYR). S135 and S138 each carry phosphoserine. A compositionally biased stretch (pro residues) spans 163 to 172 (LPPPTAPGPP). T167 is modified (phosphothreonine). Phosphoserine is present on residues S182 and S202.

As to quaternary structure, component of the DREAM complex (also named LINC complex) at least composed of E2F4, E2F5, LIN9, LIN37, LIN52, LIN54, MYBL1, MYBL2, RBL1, RBL2, RBBP4, TFDP1 and TFDP2. The complex exists in quiescent cells where it represses cell cycle-dependent genes. It dissociates in S phase when LIN9, LIN37, LIN52 and LIN54 form a subcomplex that binds to MYBL2.

In Bos taurus (Bovine), this protein is Protein lin-37 homolog (LIN37).